The chain runs to 342 residues: Phosphate acyltransferase (342 aa).

This sequence belongs to the PlsX family. In terms of assembly, homodimer. Probably interacts with PlsY.

It localises to the cytoplasm. The enzyme catalyses a fatty acyl-[ACP] + phosphate = an acyl phosphate + holo-[ACP]. Its pathway is lipid metabolism; phospholipid metabolism. Functionally, catalyzes the reversible formation of acyl-phosphate (acyl-PO(4)) from acyl-[acyl-carrier-protein] (acyl-ACP). This enzyme utilizes acyl-ACP as fatty acyl donor, but not acyl-CoA. The polypeptide is Phosphate acyltransferase (Legionella pneumophila (strain Corby)).